Consider the following 259-residue polypeptide: Malonyl-[acyl-carrier protein] O-methyltransferase (259 aa).

The protein belongs to the methyltransferase superfamily.

It catalyses the reaction malonyl-[ACP] + S-adenosyl-L-methionine = malonyl-[ACP] methyl ester + S-adenosyl-L-homocysteine. It participates in cofactor biosynthesis; biotin biosynthesis. In terms of biological role, converts the free carboxyl group of a malonyl-thioester to its methyl ester by transfer of a methyl group from S-adenosyl-L-methionine (SAM). It allows to synthesize pimeloyl-ACP via the fatty acid synthetic pathway. The protein is Malonyl-[acyl-carrier protein] O-methyltransferase of Anoxybacillus flavithermus (strain DSM 21510 / WK1).